The sequence spans 109 residues: Phycoerythrin alpha-2 subunit (109 aa).

(2R,3E)-phycoerythrobilin contacts are provided by Asp52, Ser53, Glu63, Arg64, Cys67, Thr72, Lys74, Ala75, and Lys84.

Belongs to the phycoerythrin family. In terms of assembly, heterotetramer of 2 different alpha chains and 2 identical beta chains which form 2 alpha-beta heterodimers within the heterotetramer. The two alpha-beta heterodimers are rotated to an open configuration in contrast to the closed configuration found in other cryptophyte species due to the insertion of a single amino acid, Asp-65, in a conserved region of the alpha chain. In the open form, the central chromophores are not in physical contact but are separated by a water-filled channel. In terms of processing, contains three phycoerythrobilin chromophores with binding mediated by both the alpha and beta subunits.

It is found in the plastid. Its subcellular location is the chloroplast thylakoid membrane. Light-harvesting photosynthetic tetrapyrrole chromophore-protein from the phycobiliprotein complex. This chain is Phycoerythrin alpha-2 subunit, found in Hemiselmis andersenii (Cryptophyte alga).